A 304-amino-acid chain; its full sequence is Protoheme IX farnesyltransferase 2 (304 aa).

9 consecutive transmembrane segments (helical) span residues 28–48 (VVAL…VVDF), 50–70 (WLQA…AAAF), 98–118 (ISVA…LYAL), 122–142 (LTAW…TMYL), 150–170 (IVIA…AVTG), 176–196 (AWLL…AIAI), 223–243 (ILLY…VGMV), 245–265 (SVYL…AWKL), and 282–302 (IYHL…GLFF).

The protein belongs to the UbiA prenyltransferase family. Protoheme IX farnesyltransferase subfamily.

The protein resides in the cell inner membrane. It catalyses the reaction heme b + (2E,6E)-farnesyl diphosphate + H2O = Fe(II)-heme o + diphosphate. It participates in porphyrin-containing compound metabolism; heme O biosynthesis; heme O from protoheme: step 1/1. Converts heme B (protoheme IX) to heme O by substitution of the vinyl group on carbon 2 of heme B porphyrin ring with a hydroxyethyl farnesyl side group. In Vibrio campbellii (strain ATCC BAA-1116), this protein is Protoheme IX farnesyltransferase 2.